Consider the following 150-residue polypeptide: Geranyl diphosphate phosphohydrolase (150 aa).

Residues 14 to 147 enclose the Nudix hydrolase domain; it reads SIKVAVVVCL…DNVVQDGFNP (134 aa). The short motif at 48–69 is the Nudix box element; that stretch reads GHLEFGESFEECAARELKEETD. Mg(2+) contacts are provided by glutamate 63 and glutamate 67.

It belongs to the Nudix hydrolase family. In terms of tissue distribution, expressed in petals. Little or no expression in stamens, sepals or young leaves.

It localises to the cytoplasm. It catalyses the reaction (2E)-geranyl diphosphate + H2O = (2E)-geranyl phosphate + phosphate + H(+). In terms of biological role, involved in a cytosolic pathway for the biosynthesis of free monoterpene alcohols that contribute to fragrance. Lacks terpene synthase activity, but has a diphosphohydrolase activity with geranyl diphosphate and farnesyl diphosphate as substrates. No activity with 8-oxo-dGTP and dGTP and unable to dephosphorylate geranyl phosphate to geraniol. This chain is Geranyl diphosphate phosphohydrolase, found in Rosa hybrid cultivar.